A 122-amino-acid chain; its full sequence is Large ribosomal subunit protein uL14 (122 aa).

This sequence belongs to the universal ribosomal protein uL14 family. As to quaternary structure, part of the 50S ribosomal subunit. Forms a cluster with proteins L3 and L19. In the 70S ribosome, L14 and L19 interact and together make contacts with the 16S rRNA in bridges B5 and B8.

In terms of biological role, binds to 23S rRNA. Forms part of two intersubunit bridges in the 70S ribosome. This is Large ribosomal subunit protein uL14 from Syntrophomonas wolfei subsp. wolfei (strain DSM 2245B / Goettingen).